The following is a 297-amino-acid chain: Probable endonuclease 4 (297 aa).

Zn(2+)-binding residues include His68, His109, Glu144, Asp178, His181, His213, Asp226, His228, and Glu258.

It belongs to the AP endonuclease 2 family. Zn(2+) serves as cofactor.

It carries out the reaction Endonucleolytic cleavage to 5'-phosphooligonucleotide end-products.. Endonuclease IV plays a role in DNA repair. It cleaves phosphodiester bonds at apurinic or apyrimidinic (AP) sites, generating a 3'-hydroxyl group and a 5'-terminal sugar phosphate. This Lysinibacillus sphaericus (strain C3-41) protein is Probable endonuclease 4.